We begin with the raw amino-acid sequence, 664 residues long: UvrABC system protein B (664 aa).

The Helicase ATP-binding domain maps to 25-182 (KSFGEGKNKI…RKFLHIQYAR (158 aa)). 38 to 45 (GVTGSGKT) serves as a coordination point for ATP. Residues 91-114 (YYDYYQPEAYVPSSDTFIEKDMSM) carry the Beta-hairpin motif. In terms of domain architecture, Helicase C-terminal spans 429–595 (QIEDLLNEIR…TIQKEIHDIL (167 aa)). One can recognise a UVR domain in the interval 625–660 (DKLREALKREMLRYANDMDFEKAAMFRDKMLALGPD).

It belongs to the UvrB family. Forms a heterotetramer with UvrA during the search for lesions. Interacts with UvrC in an incision complex.

The protein localises to the cytoplasm. Functionally, the UvrABC repair system catalyzes the recognition and processing of DNA lesions. A damage recognition complex composed of 2 UvrA and 2 UvrB subunits scans DNA for abnormalities. Upon binding of the UvrA(2)B(2) complex to a putative damaged site, the DNA wraps around one UvrB monomer. DNA wrap is dependent on ATP binding by UvrB and probably causes local melting of the DNA helix, facilitating insertion of UvrB beta-hairpin between the DNA strands. Then UvrB probes one DNA strand for the presence of a lesion. If a lesion is found the UvrA subunits dissociate and the UvrB-DNA preincision complex is formed. This complex is subsequently bound by UvrC and the second UvrB is released. If no lesion is found, the DNA wraps around the other UvrB subunit that will check the other stand for damage. The sequence is that of UvrABC system protein B from Leptospira biflexa serovar Patoc (strain Patoc 1 / Ames).